Here is a 230-residue protein sequence, read N- to C-terminus: Sugar fermentation stimulation protein homolog (230 aa).

The protein belongs to the SfsA family.

This chain is Sugar fermentation stimulation protein homolog, found in Clostridium acetobutylicum (strain ATCC 824 / DSM 792 / JCM 1419 / IAM 19013 / LMG 5710 / NBRC 13948 / NRRL B-527 / VKM B-1787 / 2291 / W).